The sequence spans 277 residues: MAVKKFNPITPARRQMTMPTFEEITSQEPEKSLLVALKSKAGRNAQGKITVRHRGGGVKRKYRIIDFKRNKDEIPAKVATIEYDPNRSAYIALAIYSDGEKRYILAPAGLKVGDVIESGVNADIKPGNALPLKNIPVGTVIHNIELQRGKGGQLVRAAGGSAQLMAKEGDYATLRLPSGEMRYVRIECRATIGTLSNATNDIVNIGKAGRKRHMGWRPTVRGSVMNPNDHPHGGGEGKSPVGRPSPVTPWGKPALGYKTRKTKKYSDKFIIKDRRAK.

The segment at 222 to 259 (GSVMNPNDHPHGGGEGKSPVGRPSPVTPWGKPALGYKT) is disordered.

It belongs to the universal ribosomal protein uL2 family. Part of the 50S ribosomal subunit. Forms a bridge to the 30S subunit in the 70S ribosome.

Functionally, one of the primary rRNA binding proteins. Required for association of the 30S and 50S subunits to form the 70S ribosome, for tRNA binding and peptide bond formation. It has been suggested to have peptidyltransferase activity; this is somewhat controversial. Makes several contacts with the 16S rRNA in the 70S ribosome. In Clostridium beijerinckii (strain ATCC 51743 / NCIMB 8052) (Clostridium acetobutylicum), this protein is Large ribosomal subunit protein uL2.